A 281-amino-acid polypeptide reads, in one-letter code: Probable endonuclease 4 (281 aa).

The Zn(2+) site is built by histidine 69, histidine 109, glutamate 145, aspartate 179, histidine 182, histidine 216, aspartate 229, histidine 231, and glutamate 261.

This sequence belongs to the AP endonuclease 2 family. It depends on Zn(2+) as a cofactor.

It catalyses the reaction Endonucleolytic cleavage to 5'-phosphooligonucleotide end-products.. Functionally, endonuclease IV plays a role in DNA repair. It cleaves phosphodiester bonds at apurinic or apyrimidinic (AP) sites, generating a 3'-hydroxyl group and a 5'-terminal sugar phosphate. In Chlorobaculum tepidum (strain ATCC 49652 / DSM 12025 / NBRC 103806 / TLS) (Chlorobium tepidum), this protein is Probable endonuclease 4.